Here is a 591-residue protein sequence, read N- to C-terminus: Peroxisome assembly protein 2 (591 aa).

Residues 1–78 (MSDSDPKPTA…TNIDTNNNTN (78 aa)) are disordered. Topologically, residues 1–148 (MSDSDPKPTA…TSREGTRPAF (148 aa)) are peroxisomal matrix. Over residues 7-26 (KPTAAKGAAPTSIPNSTRNP) the composition is skewed to low complexity. Positions 27–54 (NPTPPNPNPNPNPISTPAPTPTATPSPP) are enriched in pro residues. A compositionally biased stretch (low complexity) spans 55–78 (IASSSNNGNNSTRSTNIDTNNNTN). Residues 149 to 175 (RVGQVDAELLDEELVELLRGQVREALR) traverse the membrane as a helical segment. The Cytoplasmic segment spans residues 176–196 (YVGGGGGGGGGGGGGGVGSGV). The chain crosses the membrane as a helical span at residues 197-222 (AQDWEAEISLALRAVLFKLTVWDHDA). Topologically, residues 223 to 246 (TYGAALQNLKYTDARRDGPALAPP) are peroxisomal matrix. A helical transmembrane segment spans residues 247 to 273 (SRWQKALYGLVTVGGRYLWAKWEDWLL). Residues 274–283 (EQDDGFEGPS) lie on the Cytoplasmic side of the membrane. The helical transmembrane segment at 284–314 (PRVKRLARWTSALSTLHASAALVSFLVFLLH) threads the bilayer. Residues 315 to 341 (GRYRTLLDRLLRMRLAPPTSQVSREVS) are Peroxisomal matrix-facing. A helical membrane pass occupies residues 342–365 (FEYLNRQLVWHAFTEFLLFVLPLV). The Cytoplasmic portion of the chain corresponds to 366–591 (GINRWRRWLA…EDGLDEDPES (226 aa)). Residues Cys-408, Cys-411, Cys-449, Cys-451, Cys-454, Cys-457, Cys-472, and Cys-475 each coordinate Zn(2+). The RING-type; atypical zinc finger occupies 408-475 (CAICYRDQNS…EGEGWPCLRC (68 aa)). Positions 512-591 (KAPSDHEEEE…EDGLDEDPES (80 aa)) are disordered. Acidic residues-rich tracts occupy residues 517–537 (HEEEENEEEEEQQGELGENEG) and 575–591 (SEDYEAEEDGLDEDPES).

Belongs to the pex2/pex10/pex12 family. As to quaternary structure, component of the PEX2-PEX10-PEX12 retrotranslocation channel, composed of PEX2, PEX10 and PEX12.

Its subcellular location is the peroxisome membrane. It carries out the reaction [E2 ubiquitin-conjugating enzyme]-S-ubiquitinyl-L-cysteine + [acceptor protein]-L-cysteine = [E2 ubiquitin-conjugating enzyme]-L-cysteine + [acceptor protein]-S-ubiquitinyl-L-cysteine.. It functions in the pathway protein modification; protein ubiquitination. In terms of biological role, E3 ubiquitin-protein ligase component of a retrotranslocation channel required for peroxisome organization by mediating export of the PEX5 receptor from peroxisomes to the cytosol, thereby promoting PEX5 recycling. The retrotranslocation channel is composed of PEX2, PEX10 and PEX12; each subunit contributing transmembrane segments that coassemble into an open channel that specifically allows the passage of PEX5 through the peroxisomal membrane. PEX2 also regulates peroxisome organization by acting as a E3 ubiquitin-protein ligase. PEX2 ubiquitinates PEX5 during its passage through the retrotranslocation channel: catalyzes monoubiquitination of PEX5 at 'Cys-6', a modification that acts as a signal for PEX5 extraction into the cytosol. The polypeptide is Peroxisome assembly protein 2 (Thermothelomyces thermophilus (strain ATCC 42464 / BCRC 31852 / DSM 1799) (Sporotrichum thermophile)).